A 291-amino-acid polypeptide reads, in one-letter code: Elongation factor Ts (291 aa).

The interval T79–V82 is involved in Mg(2+) ion dislocation from EF-Tu.

It belongs to the EF-Ts family.

It localises to the cytoplasm. In terms of biological role, associates with the EF-Tu.GDP complex and induces the exchange of GDP to GTP. It remains bound to the aminoacyl-tRNA.EF-Tu.GTP complex up to the GTP hydrolysis stage on the ribosome. The chain is Elongation factor Ts from Stenotrophomonas maltophilia (strain K279a).